Consider the following 236-residue polypeptide: Leucyl/phenylalanyl-tRNA--protein transferase (236 aa).

Belongs to the L/F-transferase family.

The protein localises to the cytoplasm. The enzyme catalyses N-terminal L-lysyl-[protein] + L-leucyl-tRNA(Leu) = N-terminal L-leucyl-L-lysyl-[protein] + tRNA(Leu) + H(+). The catalysed reaction is N-terminal L-arginyl-[protein] + L-leucyl-tRNA(Leu) = N-terminal L-leucyl-L-arginyl-[protein] + tRNA(Leu) + H(+). It carries out the reaction L-phenylalanyl-tRNA(Phe) + an N-terminal L-alpha-aminoacyl-[protein] = an N-terminal L-phenylalanyl-L-alpha-aminoacyl-[protein] + tRNA(Phe). Functionally, functions in the N-end rule pathway of protein degradation where it conjugates Leu, Phe and, less efficiently, Met from aminoacyl-tRNAs to the N-termini of proteins containing an N-terminal arginine or lysine. This is Leucyl/phenylalanyl-tRNA--protein transferase from Shewanella sp. (strain ANA-3).